The primary structure comprises 156 residues: SsrA-binding protein (156 aa).

It belongs to the SmpB family.

The protein localises to the cytoplasm. Required for rescue of stalled ribosomes mediated by trans-translation. Binds to transfer-messenger RNA (tmRNA), required for stable association of tmRNA with ribosomes. tmRNA and SmpB together mimic tRNA shape, replacing the anticodon stem-loop with SmpB. tmRNA is encoded by the ssrA gene; the 2 termini fold to resemble tRNA(Ala) and it encodes a 'tag peptide', a short internal open reading frame. During trans-translation Ala-aminoacylated tmRNA acts like a tRNA, entering the A-site of stalled ribosomes, displacing the stalled mRNA. The ribosome then switches to translate the ORF on the tmRNA; the nascent peptide is terminated with the 'tag peptide' encoded by the tmRNA and targeted for degradation. The ribosome is freed to recommence translation, which seems to be the essential function of trans-translation. In Clostridium botulinum (strain Alaska E43 / Type E3), this protein is SsrA-binding protein.